The primary structure comprises 467 residues: Cilia- and flagella-associated protein 97 (467 aa).

Disordered regions lie at residues 1–20 (MDRY…FFDS), 76–235 (IAKP…DISP), 336–370 (RQAA…KEQQ), and 412–467 (ALSP…AAWQ). Acidic residues predominate over residues 124–135 (DNYYPDEEDSSE). Residues 162–177 (DFVSTISSSDTEYSDT) show a composition bias toward polar residues. Positions 180 to 194 (DDGASKSSYQSSKGS) are enriched in low complexity. Residues 198-216 (SPERKPSRSSMRELRHYAE) are compositionally biased toward basic and acidic residues. Over residues 223 to 235 (TDVTPLSTPDISP) the composition is skewed to polar residues. The stretch at 310-387 (KKNFSFSNDE…ALLKRLESVK (78 aa)) forms a coiled coil. Residues 421-439 (SVSRLSPSVSSGGFSRMSS) show a composition bias toward low complexity.

This sequence belongs to the CFAP97 family.

This chain is Cilia- and flagella-associated protein 97, found in Xenopus tropicalis (Western clawed frog).